A 230-amino-acid polypeptide reads, in one-letter code: Probable thioesterase YBR096W (230 aa).

The protein belongs to the lcsJ thioesterase family.

The chain is Probable thioesterase YBR096W from Saccharomyces cerevisiae (strain ATCC 204508 / S288c) (Baker's yeast).